A 528-amino-acid polypeptide reads, in one-letter code: Cytochrome P450 monooxygenase vrcB (528 aa).

A helical membrane pass occupies residues 5-27; that stretch reads YGLFFAAVALYSVALVIYRLYLH. Cys470 is a heme binding site.

This sequence belongs to the cytochrome P450 family. The cofactor is heme.

It localises to the membrane. It catalyses the reaction variecoladiene + 4 reduced [NADPH--hemoprotein reductase] + 4 O2 = variecolin + 4 oxidized [NADPH--hemoprotein reductase] + 6 H2O + 4 H(+). Its pathway is secondary metabolite biosynthesis; terpenoid biosynthesis. Cytochrome P450 monooxygenase; part of the gene cluster that mediates the biosynthesis of the sesterterpene variecolin. The first step in the pathway is performed by the variecoladiene synthase vrcA that possesses both prenyl transferase and terpene cyclase activity, converting isopentenyl diphosphate and dimethylallyl diphosphate into geranylfarnesyl pyrophosphate (GFPP) and then converting GFPP into the tetracyclic variecoladiene. The cytochrome P450 monooxygenase vrcB then catalyzes multiple oxidations at C-5 and C-20 positions to yield variecolin. The polypeptide is Cytochrome P450 monooxygenase vrcB (Aspergillus aculeatus (strain ATCC 16872 / CBS 172.66 / WB 5094)).